The chain runs to 133 residues: Large ribosomal subunit protein bL20 (133 aa).

The protein belongs to the bacterial ribosomal protein bL20 family.

In terms of biological role, binds directly to 23S ribosomal RNA and is necessary for the in vitro assembly process of the 50S ribosomal subunit. It is not involved in the protein synthesizing functions of that subunit. The sequence is that of Large ribosomal subunit protein bL20 from Bartonella tribocorum (strain CIP 105476 / IBS 506).